A 328-amino-acid chain; its full sequence is Acyl-CoA wax alcohol acyltransferase 1 (328 aa).

2 helical membrane passes run Ser12 to Leu32 and Val34 to Phe53.

It belongs to the diacylglycerol acyltransferase family. As to expression, predominantly expressed in skin, where it is limited to the sebaceous gland. Expressed in more mature, centrally located cells just before their rupture and sebum release. Also expressed in all tissues except spleen. Expressed at higher level in thymus, prostate and testis.

The protein resides in the endoplasmic reticulum membrane. It catalyses the reaction a long chain fatty alcohol + a fatty acyl-CoA = a wax ester + CoA. It carries out the reaction 1,2-di-(9Z-octadecenoyl)-sn-glycerol + (9Z)-octadecenoyl-CoA = 1,2,3-tri-(9Z-octadecenoyl)-glycerol + CoA. The enzyme catalyses hexadecan-1-ol + (9Z)-octadecenoyl-CoA = hexadecanyl (9Z)-octadecenoate + CoA. The catalysed reaction is decan-1-ol + (9Z)-octadecenoyl-CoA = 1-O-decyl-(9Z)-octadecenoate + CoA. It catalyses the reaction (9Z)-hexadecen-1-ol + (9Z)-octadecenoyl-CoA = 1-O-(9Z)-hexadecenyl (9Z)-octadecenoate + CoA. It carries out the reaction octadecan-1-ol + (9Z)-octadecenoyl-CoA = 1-O-octadecyl (9Z)-octadecenoate + CoA. The enzyme catalyses (9Z)-octadecen-1-ol + (9Z)-octadecenoyl-CoA = 1-O-(9Z)-octadecenyl (9Z)-octadecenoate + CoA. The catalysed reaction is hexadecan-1-ol + hexadecanoyl-CoA = hexadecanyl hexadecanoate + CoA. It catalyses the reaction hexadecan-1-ol + (9Z)-hexadecenoyl-CoA = 1-O-hexadecyl (9Z)-hexadecenoate + CoA. It carries out the reaction hexadecan-1-ol + octadecanoyl-CoA = hexadecanyl octadecanoate + CoA. The enzyme catalyses eicosan-1-ol + (9Z)-octadecenoyl-CoA = 1-O-eicosanyl (9Z)-octadecenoate + CoA. Its function is as follows. Acyltransferase that catalyzes the formation of ester bonds between fatty alcohols and fatty acyl-CoAs to form wax monoesters. Shows a strong preference for decyl alcohol (C10), with less activity towards C16 and C18 alcohols. Shows a strong preference for saturated acyl-CoAs. This chain is Acyl-CoA wax alcohol acyltransferase 1 (AWAT1), found in Homo sapiens (Human).